Here is a 186-residue protein sequence, read N- to C-terminus: Potassium-transporting ATPase KdpC subunit 1 (186 aa).

A helical membrane pass occupies residues 10–30 (LTIITMVLCGFLFPLAITLIG).

Belongs to the KdpC family. As to quaternary structure, the system is composed of three essential subunits: KdpA, KdpB and KdpC.

The protein resides in the cell membrane. Its function is as follows. Part of the high-affinity ATP-driven potassium transport (or Kdp) system, which catalyzes the hydrolysis of ATP coupled with the electrogenic transport of potassium into the cytoplasm. This subunit acts as a catalytic chaperone that increases the ATP-binding affinity of the ATP-hydrolyzing subunit KdpB by the formation of a transient KdpB/KdpC/ATP ternary complex. In Staphylococcus aureus (strain Mu50 / ATCC 700699), this protein is Potassium-transporting ATPase KdpC subunit 1.